The following is a 192-amino-acid chain: CASP-like protein 4C1 (192 aa).

Polar residues predominate over residues 1–11 (MRSPQSLRNGE). Residues 1 to 23 (MRSPQSLRNGETPSPSPRPPRFP) form a disordered region. The Cytoplasmic portion of the chain corresponds to 1-40 (MRSPQSLRNGETPSPSPRPPRFPTPHFHSTVSLQKLKRFN). The span at 14-23 (SPSPRPPRFP) shows a compositional bias: pro residues. A helical transmembrane segment spans residues 41 to 61 (LLILVFRLSTFCFSLASSVFM). The Extracellular segment spans residues 62–75 (LTNPTWYHFDAFRY). Residues 76-96 (VFAANAIVAIYSLFEMAASVW) traverse the membrane as a helical segment. Residues 97-107 (EISRGNTLFPE) are Cytoplasmic-facing. A helical transmembrane segment spans residues 108 to 128 (ILQVWFDFGHDQVFAYLLLSA). The Extracellular portion of the chain corresponds to 129 to 156 (DSAATALAKTLKGGDTCAASNAFCVQSY). The helical transmembrane segment at 157–177 (IAIALGFAGFLFLGLSSLLSG) threads the bilayer. The Cytoplasmic portion of the chain corresponds to 178 to 192 (FRVVCFLINGSRFYV).

Belongs to the Casparian strip membrane proteins (CASP) family. In terms of assembly, homodimer and heterodimers.

It localises to the cell membrane. In Ricinus communis (Castor bean), this protein is CASP-like protein 4C1.